Here is a 384-residue protein sequence, read N- to C-terminus: Deoxyguanosinetriphosphate triphosphohydrolase-like protein (384 aa).

One can recognise an HD domain in the interval 63–199 (RLTHSLEVAT…ASLADDISYI (137 aa)).

Belongs to the dGTPase family. Type 2 subfamily.

This chain is Deoxyguanosinetriphosphate triphosphohydrolase-like protein, found in Rickettsia typhi (strain ATCC VR-144 / Wilmington).